Reading from the N-terminus, the 806-residue chain is Facilitated trehalose transporter Tret1 (806 aa).

Disordered stretches follow at residues M1–T34 and L48–Q138. Over M1–P339 the chain is Cytoplasmic. Positions G25–T34 are enriched in low complexity. A helical transmembrane segment spans residues I340–G360. The Extracellular segment spans residues F361–S389. A glycan (N-linked (GlcNAc...) asparagine) is linked at N377. Residues W390 to I410 traverse the membrane as a helical segment. The Cytoplasmic portion of the chain corresponds to E411 to T424. A helical transmembrane segment spans residues P425–G445. The Extracellular portion of the chain corresponds to R446–A447. The chain crosses the membrane as a helical span at residues L448–V468. Topologically, residues Q469 to R473 are cytoplasmic. Residues G474–A494 traverse the membrane as a helical segment. Residues G495–S501 are Extracellular-facing. Residues G502–P522 traverse the membrane as a helical segment. Over E523 to P585 the chain is Cytoplasmic. Residues L586–F606 traverse the membrane as a helical segment. The Extracellular segment spans residues Y607 to N622. Residues L623 to I643 traverse the membrane as a helical segment. Topologically, residues D644 to K649 are cytoplasmic. Residues M650–F670 form a helical membrane-spanning segment. Residues Y671–Q681 are Extracellular-facing. The chain crosses the membrane as a helical span at residues V682 to G702. The Cytoplasmic portion of the chain corresponds to P703–S723. The chain crosses the membrane as a helical span at residues V724–I744. The Extracellular segment spans residues N745–H750. The chain crosses the membrane as a helical span at residues G751–V771. Topologically, residues P772–M806 are cytoplasmic.

This sequence belongs to the major facilitator superfamily. Sugar transporter (TC 2.A.1.1) family. Trehalose transporter subfamily.

It is found in the cell membrane. In terms of biological role, high-capacity facilitative transporter for trehalose. Does not transport maltose, sucrose or lactose. Mediates the bidirectional transfer of trehalose. Responsible for the transport of trehalose synthesized in the fat body and the incorporation of trehalose into other tissues that require a carbon source, thereby regulating trehalose levels in the hemolymph. This is Facilitated trehalose transporter Tret1 from Aedes aegypti (Yellowfever mosquito).